Here is a 1015-residue protein sequence, read N- to C-terminus: Formate dehydrogenase, nitrate-inducible, major subunit (1015 aa).

A signal peptide (tat-type signal) is located at residues 1-33 (MDVSRRQFFKICAGGMAGTTVAALGFAPKQALA). The region spanning 43-106 (AKEIRNTCTY…GLLDYVNSEN (64 aa)) is the 4Fe-4S Mo/W bis-MGD-type domain. 4 residues coordinate [4Fe-4S] cluster: cysteine 50, cysteine 53, cysteine 57, and cysteine 92. Position 196 (selenocysteine 196) interacts with Mo-bis(molybdopterin guanine dinucleotide). Position 196 (selenocysteine 196) is a non-standard amino acid, selenocysteine.

It belongs to the prokaryotic molybdopterin-containing oxidoreductase family. As to quaternary structure, trimer of heterotrimers, consisting of subunits alpha, beta and gamma. The cofactor is Mo-bis(molybdopterin guanine dinucleotide). [4Fe-4S] cluster is required as a cofactor. In terms of processing, exported by the Tat system. The position of the signal peptide cleavage has not been experimentally proven.

Its subcellular location is the periplasm. The catalysed reaction is a quinone + formate + H(+) = a quinol + CO2. Functionally, formate dehydrogenase allows E.coli to use formate as major electron donor during anaerobic respiration, when nitrate is used as electron acceptor. The alpha subunit FdnG contains the formate oxidation site. Electrons are transferred from formate to menaquinone in the gamma subunit (FdnI), through the 4Fe-4S clusters in the beta subunit (FdnH). Formate dehydrogenase-N is part of a system that generates proton motive force, together with the dissimilatory nitrate reductase (Nar). This Escherichia coli (strain K12) protein is Formate dehydrogenase, nitrate-inducible, major subunit (fdnG).